We begin with the raw amino-acid sequence, 302 residues long: Glutaminase (302 aa).

Ser61, Asn111, Glu155, Asn162, Tyr186, Tyr238, and Val256 together coordinate substrate.

Belongs to the glutaminase family. Homotetramer.

It carries out the reaction L-glutamine + H2O = L-glutamate + NH4(+). This is Glutaminase from Ectopseudomonas mendocina (strain ymp) (Pseudomonas mendocina).